Consider the following 197-residue polypeptide: Protein GrpE (197 aa).

Residues 1–39 are disordered; that stretch reads MSSKEQKTPEGQAPEEIIMDQHEEIEAVEPEASAEQVDP.

The protein belongs to the GrpE family. Homodimer.

It localises to the cytoplasm. Participates actively in the response to hyperosmotic and heat shock by preventing the aggregation of stress-denatured proteins, in association with DnaK and GrpE. It is the nucleotide exchange factor for DnaK and may function as a thermosensor. Unfolded proteins bind initially to DnaJ; upon interaction with the DnaJ-bound protein, DnaK hydrolyzes its bound ATP, resulting in the formation of a stable complex. GrpE releases ADP from DnaK; ATP binding to DnaK triggers the release of the substrate protein, thus completing the reaction cycle. Several rounds of ATP-dependent interactions between DnaJ, DnaK and GrpE are required for fully efficient folding. The polypeptide is Protein GrpE (Escherichia coli O157:H7 (strain EC4115 / EHEC)).